The chain runs to 458 residues: tRNA modification GTPase MnmE (458 aa).

R22, E85, and R124 together coordinate (6S)-5-formyl-5,6,7,8-tetrahydrofolate. Residues 220-379 (GIKTVIVGRP…LEEHISELVF (160 aa)) form the TrmE-type G domain. N230 is a K(+) binding site. Residues 230–235 (NVGKSS), 249–255 (TEIPGTT), and 274–277 (DTAG) contribute to the GTP site. S234 contributes to the Mg(2+) binding site. 3 residues coordinate K(+): T249, I251, and T254. Residue T255 coordinates Mg(2+). K458 is a binding site for (6S)-5-formyl-5,6,7,8-tetrahydrofolate.

It belongs to the TRAFAC class TrmE-Era-EngA-EngB-Septin-like GTPase superfamily. TrmE GTPase family. As to quaternary structure, homodimer. Heterotetramer of two MnmE and two MnmG subunits. Requires K(+) as cofactor.

The protein localises to the cytoplasm. In terms of biological role, exhibits a very high intrinsic GTPase hydrolysis rate. Involved in the addition of a carboxymethylaminomethyl (cmnm) group at the wobble position (U34) of certain tRNAs, forming tRNA-cmnm(5)s(2)U34. In Natranaerobius thermophilus (strain ATCC BAA-1301 / DSM 18059 / JW/NM-WN-LF), this protein is tRNA modification GTPase MnmE.